The chain runs to 360 residues: MKASILEKLEHLAERFTEVGALMGDPDVISNQDKFRDLGREYAELEPVIKCYNEYNTVLGNIAEAKVLISDSDPDMRAMGQDELKENEAALEPLELELQKLLLPKDPNDGKNVFLEIRAGTGGDEAAIFSGDLFRMYSRYAESKGWKVEIISENQGEHGGYKEIITRVVGQGVYSELKFESGAHRVQRVPETESQGRIHTSACTVAVMPEADEMAEVNINKADLRIDTFRASGAGGQHVNKTDSAIRLTHIPTGVVVECQDERSQHKNRAKAMSLLASRLSMAQEEKAAAEQASARKSLVGSGDRSERIRTYNFPQGRVTDHRINLTLYKLDEVMQGALGDVIQPLVNEYQADQLAALSE.

At Gln237 the chain carries N5-methylglutamine.

It belongs to the prokaryotic/mitochondrial release factor family. Post-translationally, methylated by PrmC. Methylation increases the termination efficiency of RF1.

Its subcellular location is the cytoplasm. Its function is as follows. Peptide chain release factor 1 directs the termination of translation in response to the peptide chain termination codons UAG and UAA. This chain is Peptide chain release factor 1, found in Saccharophagus degradans (strain 2-40 / ATCC 43961 / DSM 17024).